A 253-amino-acid chain; its full sequence is NAD(P)H-quinone oxidoreductase subunit K (253 aa).

Residues Cys-68, Cys-69, Cys-133, and Cys-164 each contribute to the [4Fe-4S] cluster site.

Belongs to the complex I 20 kDa subunit family. As to quaternary structure, NDH-1 can be composed of about 15 different subunits; different subcomplexes with different compositions have been identified which probably have different functions. [4Fe-4S] cluster is required as a cofactor.

It localises to the cellular thylakoid membrane. The enzyme catalyses a plastoquinone + NADH + (n+1) H(+)(in) = a plastoquinol + NAD(+) + n H(+)(out). The catalysed reaction is a plastoquinone + NADPH + (n+1) H(+)(in) = a plastoquinol + NADP(+) + n H(+)(out). NDH-1 shuttles electrons from an unknown electron donor, via FMN and iron-sulfur (Fe-S) centers, to quinones in the respiratory and/or the photosynthetic chain. The immediate electron acceptor for the enzyme in this species is believed to be plastoquinone. Couples the redox reaction to proton translocation, and thus conserves the redox energy in a proton gradient. Cyanobacterial NDH-1 also plays a role in inorganic carbon-concentration. This chain is NAD(P)H-quinone oxidoreductase subunit K, found in Synechococcus sp. (strain CC9311).